We begin with the raw amino-acid sequence, 275 residues long: Large ribosomal subunit protein uL2 (275 aa).

Disordered stretches follow at residues 24 to 54 and 223 to 275; these read LYKGRPHDALTEKKTSKAGRNNSGRVTVRHQ and VAMN…RHKR. Composition is skewed to basic and acidic residues over residues 25–38 and 229–241; these read YKGRPHDALTEKKT and DHPHGGGEGRTGE.

The protein belongs to the universal ribosomal protein uL2 family. In terms of assembly, part of the 50S ribosomal subunit. Forms a bridge to the 30S subunit in the 70S ribosome.

Its function is as follows. One of the primary rRNA binding proteins. Required for association of the 30S and 50S subunits to form the 70S ribosome, for tRNA binding and peptide bond formation. It has been suggested to have peptidyltransferase activity; this is somewhat controversial. Makes several contacts with the 16S rRNA in the 70S ribosome. The chain is Large ribosomal subunit protein uL2 from Azoarcus sp. (strain BH72).